The primary structure comprises 457 residues: Elongation factor 1-alpha (457 aa).

Glycine 2 bears the N,N,N-trimethylglycine mark. Position 3 is an N6,N6-dimethyllysine; alternate (lysine 3). Position 3 is an N6-methyllysine; alternate (lysine 3). The region spanning 5–240 (KTHVNVVVIG…DAIEPPVRPS (236 aa)) is the tr-type G domain. Positions 14 to 21 (GHVDSGKS) are G1. 14-21 (GHVDSGKS) provides a ligand contact to GTP. Position 30 is an N6-methyllysine (lysine 30). Residues 70–74 (GITID) are G2. An N6,N6,N6-trimethyllysine modification is found at lysine 79. The G3 stretch occupies residues 91–94 (DAPG). Residues 91–95 (DAPGH) and 153–156 (NKMD) each bind GTP. A G4 region spans residues 153 to 156 (NKMD). The segment at 192–194 (SGW) is G5. Residue lysine 316 is modified to N6,N6-dimethyllysine; alternate. At lysine 316 the chain carries N6-methyllysine; alternate. Lysine 389 is subject to N6-methyllysine.

Belongs to the TRAFAC class translation factor GTPase superfamily. Classic translation factor GTPase family. EF-Tu/EF-1A subfamily.

It localises to the cytoplasm. Functionally, this protein promotes the GTP-dependent binding of aminoacyl-tRNA to the A-site of ribosomes during protein biosynthesis. This Mucor circinelloides f. lusitanicus (Mucor racemosus var. lusitanicus) protein is Elongation factor 1-alpha (TEF-3).